The primary structure comprises 310 residues: Ribosomal RNA small subunit methyltransferase H (310 aa).

S-adenosyl-L-methionine is bound by residues 32–34 (GGH), aspartate 52, phenylalanine 79, aspartate 100, and glutamine 107.

It belongs to the methyltransferase superfamily. RsmH family.

Its subcellular location is the cytoplasm. It catalyses the reaction cytidine(1402) in 16S rRNA + S-adenosyl-L-methionine = N(4)-methylcytidine(1402) in 16S rRNA + S-adenosyl-L-homocysteine + H(+). Specifically methylates the N4 position of cytidine in position 1402 (C1402) of 16S rRNA. The polypeptide is Ribosomal RNA small subunit methyltransferase H (Bacillus mycoides (strain KBAB4) (Bacillus weihenstephanensis)).